Here is a 206-residue protein sequence, read N- to C-terminus: Large ribosomal subunit protein uL4 (206 aa).

The protein belongs to the universal ribosomal protein uL4 family. As to quaternary structure, part of the 50S ribosomal subunit.

Its function is as follows. One of the primary rRNA binding proteins, this protein initially binds near the 5'-end of the 23S rRNA. It is important during the early stages of 50S assembly. It makes multiple contacts with different domains of the 23S rRNA in the assembled 50S subunit and ribosome. Forms part of the polypeptide exit tunnel. The protein is Large ribosomal subunit protein uL4 of Methylorubrum populi (strain ATCC BAA-705 / NCIMB 13946 / BJ001) (Methylobacterium populi).